Consider the following 913-residue polypeptide: DNA mismatch repair protein MutS (913 aa).

Gly-720–Ser-727 serves as a coordination point for ATP.

This sequence belongs to the DNA mismatch repair MutS family.

This protein is involved in the repair of mismatches in DNA. It is possible that it carries out the mismatch recognition step. This protein has a weak ATPase activity. This chain is DNA mismatch repair protein MutS, found in Prochlorococcus marinus (strain AS9601).